Consider the following 115-residue polypeptide: U3-lycotoxin-Ls1a (115 aa).

The signal sequence occupies residues 1–20 (MKFVLLFGVLLVTLFSYSSA). A propeptide spanning residues 21 to 44 (EMLDDFDQAVEDELLSLIEKEEAR) is cleaved from the precursor. Cystine bridges form between Cys-48–Cys-63, Cys-55–Cys-72, Cys-62–Cys-87, and Cys-74–Cys-85.

Belongs to the neurotoxin 19 (CSTX) family. 01 subfamily. As to expression, expressed by the venom gland.

It localises to the secreted. In Lycosa singoriensis (Wolf spider), this protein is U3-lycotoxin-Ls1a.